The sequence spans 420 residues: Deoxyribodipyrimidine photo-lyase (420 aa).

The 123-residue stretch at 2–124 (GPLLVWHRGD…PLHLLPAPHL (123 aa)) folds into the Photolyase/cryptochrome alpha/beta domain. Positions 152–175 (APEALPKGPEEGEIPREDPGLPLP) are disordered. A compositionally biased stretch (basic and acidic residues) spans 159 to 170 (GPEEGEIPREDP). FAD is bound at residue tyrosine 197. Arginine 201 contacts DNA. FAD is bound at residue 209–213 (GSRLS). 2 interaction with DNA regions span residues 244-251 (ELLWRDFS) and 310-311 (NR). 341 to 343 (DGD) lines the FAD pocket. Glutamine 373 contacts DNA.

Belongs to the DNA photolyase class-1 family. Monomer. Requires FAD as cofactor.

It catalyses the reaction cyclobutadipyrimidine (in DNA) = 2 pyrimidine residues (in DNA).. In terms of biological role, involved in repair of UV radiation-induced DNA damage. Catalyzes the light-dependent monomerization (300-600 nm) of cyclobutyl pyrimidine dimers (in cis-syn configuration), which are formed between adjacent bases on the same DNA strand upon exposure to ultraviolet radiation. The chain is Deoxyribodipyrimidine photo-lyase (phr) from Thermus thermophilus (strain ATCC BAA-163 / DSM 7039 / HB27).